Reading from the N-terminus, the 162-residue chain is Large ribosomal subunit protein uL15 (162 aa).

Positions 1-18 (MKLNEIRDNEGATKDRMR) are enriched in basic and acidic residues. The segment at 1–42 (MKLNEIRDNEGATKDRMRVGRGIGSGKGKTAGRGVKGQKART) is disordered. Over residues 21 to 35 (RGIGSGKGKTAGRGV) the composition is skewed to gly residues.

The protein belongs to the universal ribosomal protein uL15 family. In terms of assembly, part of the 50S ribosomal subunit.

Its function is as follows. Binds to the 23S rRNA. The chain is Large ribosomal subunit protein uL15 from Methylobacterium sp. (strain 4-46).